Here is a 554-residue protein sequence, read N- to C-terminus: Propanediol dehydratase large subunit (554 aa).

This sequence belongs to the diol/glycerol dehydratase large subunit family. As to quaternary structure, the propanediol dehydratase enzyme is a heterotrimeric complex composed of a large (PduC), a medium (PduD) and a small (PduE) subunit. Requires adenosylcob(III)alamin as cofactor.

It localises to the bacterial microcompartment. It carries out the reaction propane-1,2-diol = propanal + H2O. It participates in polyol metabolism; 1,2-propanediol degradation. Inhibited by glycerol. Its function is as follows. Part of the PduCDE complex that catalyzes the dehydration of 1,2-propanediol (1,2-PD) to propionaldehyde. Required for S.typhimurium growth on 1,2-PD as the sole carbon and energy source. This subunit is directly targeted to the BMC. The 1,2-PD-specific bacterial microcompartment (BMC) concentrates low levels of 1,2-PD catabolic enzymes, concentrates volatile reaction intermediates thus enhancing pathway flux and keeps the level of toxic, mutagenic propionaldehyde low. This Salmonella typhimurium (strain LT2 / SGSC1412 / ATCC 700720) protein is Propanediol dehydratase large subunit.